The chain runs to 423 residues: MVEGIPKRWKVLSGQNKWKGLLDPLDPDLRRYIIHYGEMSQVGYDAFNWDRKSRYAGDCYYSKNRLLARTGFLKANPFRYKVTKYIYATASIKLPISFIVKSLSKDASRVQTNWMGYIAVATDQGKAMLGRRDIVVAWRGTLQPYEWANDFDFPLEPAISVFPVTDPKDNPRIGSGWLDIYTASDSRSPYDTTSAQEQVQGELKRLLELYKDEEISITFTGHSLGAVMSVLSAADLVYGKKNNININLQKKQVPITVFAFGSPRIGDHNFKNVVDSLQPLNILRIVNVPDVAPHYPLLLYSEIGEVLEINTLNSTYLKRSLNFRNYHNLEIYLHGMAGMQDTDGVFKLEIGRDISLVNKGLDALKDEYLVPSTWRCLANKGMLQMDDGTWKLDVHRRDHDDDVDADDNDDSSTSNQLQELNTD.

Residues 194–217 (SAQEQVQGELKRLLELYKDEEISI) adopt a coiled-coil conformation. Residue Ser223 is the Acyl-ester intermediate of the active site. Residues Ser223, Asp290, and His327 each act as charge relay system in the active site. Positions 399 to 423 (HDDDVDADDNDDSSTSNQLQELNTD) are disordered. Over residues 401 to 410 (DDVDADDNDD) the composition is skewed to acidic residues. Residues 411–423 (SSTSNQLQELNTD) are compositionally biased toward polar residues.

The protein belongs to the AB hydrolase superfamily. Lipase family.

It is found in the cytoplasm. Functionally, acylhydrolase that catalyzes the hydrolysis of phospholipids at the sn-1 position. The polypeptide is Phospholipase A1-IIalpha (Arabidopsis thaliana (Mouse-ear cress)).